We begin with the raw amino-acid sequence, 166 residues long: Probable protein tyrosine phosphatase type IVA A (166 aa).

Residues 10–164 (NPASLVESST…YKSKKKSSCR (155 aa)) form the Tyrosine-protein phosphatase domain. The cysteines at positions 52 and 107 are disulfide-linked. Catalysis depends on aspartate 75, which acts as the Proton donor. Residue cysteine 107 is the Phosphocysteine intermediate of the active site. 108 to 113 (VAGLGR) contributes to the phosphate binding site. A substrate-binding site is contributed by arginine 113. Cysteine 163 carries the cysteine methyl ester modification. The S-farnesyl cysteine moiety is linked to residue cysteine 163. The propeptide at 164–166 (RIM) is removed in mature form.

This sequence belongs to the protein-tyrosine phosphatase family.

The protein localises to the membrane. The catalysed reaction is O-phospho-L-tyrosyl-[protein] + H2O = L-tyrosyl-[protein] + phosphate. The polypeptide is Probable protein tyrosine phosphatase type IVA A (Dictyostelium discoideum (Social amoeba)).